We begin with the raw amino-acid sequence, 283 residues long: Urease accessory protein UreD (283 aa).

The segment at 1 to 21 (MTQTQPVGTLRLTIDDQGPQG) is disordered.

The protein belongs to the UreD family. As to quaternary structure, ureD, UreF and UreG form a complex that acts as a GTP-hydrolysis-dependent molecular chaperone, activating the urease apoprotein by helping to assemble the nickel containing metallocenter of UreC. The UreE protein probably delivers the nickel.

The protein localises to the cytoplasm. Functionally, probably acts in the maturation of urease via the functional incorporation of the urease nickel metallocenter. Required for urease expression. This is Urease accessory protein UreD from Corynebacterium glutamicum (strain ATCC 13032 / DSM 20300 / JCM 1318 / BCRC 11384 / CCUG 27702 / LMG 3730 / NBRC 12168 / NCIMB 10025 / NRRL B-2784 / 534).